We begin with the raw amino-acid sequence, 503 residues long: Annexin A11 (503 aa).

2 stretches are compositionally biased toward pro residues: residues 80–117 (GYPP…PGMP) and 123–167 (PGAP…PVPS). The segment at 80–172 (GYPPVPPGGF…QPVPSYPGYS (93 aa)) is disordered. 4 Annexin repeats span residues 198–269 (FDPL…ALMK), 270–341 (TPVL…SLSQ), 353–425 (SLVQ…AVVK), and 429–500 (NTPA…KICG). An N6-acetyllysine mark is found at lysine 246 and lysine 253. Lysine 477 bears the N6-acetyllysine mark.

The protein belongs to the annexin family. In terms of assembly, interacts with S100A6. Interacts with PDCD6 in a calcium-dependent manner. Interacts with KIF23 during cytokinesis.

The protein localises to the cytoplasm. It is found in the melanosome. Its subcellular location is the nucleus envelope. The protein resides in the nucleus. It localises to the nucleoplasm. The protein localises to the cytoskeleton. It is found in the spindle. Its function is as follows. Required for midbody formation and completion of the terminal phase of cytokinesis. Binds specifically to calcyclin in a calcium-dependent manner. This is Annexin A11 (Anxa11) from Mus musculus (Mouse).